The primary structure comprises 425 residues: MSVIIDIHAREILDSRGNPTVEVDVTLEDGTMGRAAVPSGASTGAYEAVEKRDGDKARYKGKGVLAAVEAVNGEIADTLVGFDATEQVAIDQTMCELDGTDNKGRLGANAILGVSLATAKAAADFTAQPLYRYVGGTMAHVLPVPMMNIINGGEHADNPIDIQEFMIMPVSATSIAEAVRMGSEVFHTLKSELSAAGLSTGIGDEGGFAPNLSSTRDALDFVLKSIEKAGYAPGDDMVLALDCAATEYYRDGKYELSGEGKSLTSDENVAYLAALVANYPIFSIEDGMGEDDWDGWIALTEALGDKVQLVGDDLFVTNPARLKDGIDRKAANSLLVKVNQIGTLTETLAAVNMATRAGFTSVMSHRSGETEDATIADLAVATNCGQIKTGSLARSDRLAKYNQLIRIEEQLEETANFAGRSILRG.

Glutamine 163 provides a ligand contact to (2R)-2-phosphoglycerate. Residue glutamate 205 is the Proton donor of the active site. Residues aspartate 242, glutamate 285, and aspartate 312 each coordinate Mg(2+). Residues lysine 337, arginine 366, serine 367, and lysine 388 each contribute to the (2R)-2-phosphoglycerate site. Lysine 337 functions as the Proton acceptor in the catalytic mechanism.

It belongs to the enolase family. Requires Mg(2+) as cofactor.

The protein resides in the cytoplasm. It localises to the secreted. The protein localises to the cell surface. It carries out the reaction (2R)-2-phosphoglycerate = phosphoenolpyruvate + H2O. It participates in carbohydrate degradation; glycolysis; pyruvate from D-glyceraldehyde 3-phosphate: step 4/5. Catalyzes the reversible conversion of 2-phosphoglycerate (2-PG) into phosphoenolpyruvate (PEP). It is essential for the degradation of carbohydrates via glycolysis. The polypeptide is Enolase (Jannaschia sp. (strain CCS1)).